Reading from the N-terminus, the 184-residue chain is Protein GrpE (184 aa).

It belongs to the GrpE family. Homodimer.

The protein localises to the cytoplasm. In terms of biological role, participates actively in the response to hyperosmotic and heat shock by preventing the aggregation of stress-denatured proteins, in association with DnaK and GrpE. It is the nucleotide exchange factor for DnaK and may function as a thermosensor. Unfolded proteins bind initially to DnaJ; upon interaction with the DnaJ-bound protein, DnaK hydrolyzes its bound ATP, resulting in the formation of a stable complex. GrpE releases ADP from DnaK; ATP binding to DnaK triggers the release of the substrate protein, thus completing the reaction cycle. Several rounds of ATP-dependent interactions between DnaJ, DnaK and GrpE are required for fully efficient folding. The chain is Protein GrpE from Pseudomonas putida (strain GB-1).